The chain runs to 407 residues: Phosphopentomutase (407 aa).

Residues aspartate 11, aspartate 305, histidine 310, aspartate 346, histidine 347, and histidine 358 each contribute to the Mn(2+) site.

It belongs to the phosphopentomutase family. Mn(2+) is required as a cofactor.

The protein localises to the cytoplasm. The enzyme catalyses 2-deoxy-alpha-D-ribose 1-phosphate = 2-deoxy-D-ribose 5-phosphate. It catalyses the reaction alpha-D-ribose 1-phosphate = D-ribose 5-phosphate. The protein operates within carbohydrate degradation; 2-deoxy-D-ribose 1-phosphate degradation; D-glyceraldehyde 3-phosphate and acetaldehyde from 2-deoxy-alpha-D-ribose 1-phosphate: step 1/2. Isomerase that catalyzes the conversion of deoxy-ribose 1-phosphate (dRib-1-P) and ribose 1-phosphate (Rib-1-P) to deoxy-ribose 5-phosphate (dRib-5-P) and ribose 5-phosphate (Rib-5-P), respectively. The chain is Phosphopentomutase from Legionella pneumophila (strain Paris).